We begin with the raw amino-acid sequence, 299 residues long: Glycine--tRNA ligase alpha subunit (299 aa).

This sequence belongs to the class-II aminoacyl-tRNA synthetase family. In terms of assembly, tetramer of two alpha and two beta subunits.

It localises to the cytoplasm. The catalysed reaction is tRNA(Gly) + glycine + ATP = glycyl-tRNA(Gly) + AMP + diphosphate. The polypeptide is Glycine--tRNA ligase alpha subunit (Laribacter hongkongensis (strain HLHK9)).